A 217-amino-acid chain; its full sequence is Imidazole glycerol phosphate synthase subunit HisH (217 aa).

Residues 3-217 (TIAIVDYGMG…IYRNFVHWKP (215 aa)) enclose the Glutamine amidotransferase type-1 domain. Residue C82 is the Nucleophile of the active site. Active-site residues include H197 and E199.

In terms of assembly, heterodimer of HisH and HisF.

The protein localises to the cytoplasm. The catalysed reaction is 5-[(5-phospho-1-deoxy-D-ribulos-1-ylimino)methylamino]-1-(5-phospho-beta-D-ribosyl)imidazole-4-carboxamide + L-glutamine = D-erythro-1-(imidazol-4-yl)glycerol 3-phosphate + 5-amino-1-(5-phospho-beta-D-ribosyl)imidazole-4-carboxamide + L-glutamate + H(+). It carries out the reaction L-glutamine + H2O = L-glutamate + NH4(+). It participates in amino-acid biosynthesis; L-histidine biosynthesis; L-histidine from 5-phospho-alpha-D-ribose 1-diphosphate: step 5/9. IGPS catalyzes the conversion of PRFAR and glutamine to IGP, AICAR and glutamate. The HisH subunit catalyzes the hydrolysis of glutamine to glutamate and ammonia as part of the synthesis of IGP and AICAR. The resulting ammonia molecule is channeled to the active site of HisF. This chain is Imidazole glycerol phosphate synthase subunit HisH, found in Ralstonia nicotianae (strain ATCC BAA-1114 / GMI1000) (Ralstonia solanacearum).